The chain runs to 430 residues: MTTLTLNTSLLSSCRILAAFSGGLDSTVLLHQLVLWRERHPDVTLRAIHIHHGLSPHADSWVRHCETVCERWQVPLVVERVTLADNGLGIEAHAREARYRAFAQTLLPGEVLATAQHLDDQCETFLLALKRGSGPAGLSAMGECSPFAGTLLLRPLLRETRKTLEQWAVRHGLCWIEDESNQDDAYDRNFLRLRALPLLQQRWPHFPAAVARSATLCAEQERLLDELLASDLTDCITAEGTLRLSPLMLMSDVRRAAILRRWLAMRNAPMPSRDALERIWQEVALARDDASPCLRFGDHEIRRYQSQLWWIKTVAGQHETTVVWPVWQTPLALPAGLGTVQLVPGGELRRPREEESVSIRFKAPGVLHIVGRNGGRKLKKIWQEQGIPPWRRDTTPLLFYGETLIAAAGVFVTREGAAEDKEGVSLVWHA.

21–26 contributes to the ATP binding site; sequence SGGLDS.

Belongs to the tRNA(Ile)-lysidine synthase family.

The protein localises to the cytoplasm. It carries out the reaction cytidine(34) in tRNA(Ile2) + L-lysine + ATP = lysidine(34) in tRNA(Ile2) + AMP + diphosphate + H(+). Its function is as follows. Ligates lysine onto the cytidine present at position 34 of the AUA codon-specific tRNA(Ile) that contains the anticodon CAU, in an ATP-dependent manner. Cytidine is converted to lysidine, thus changing the amino acid specificity of the tRNA from methionine to isoleucine. The protein is tRNA(Ile)-lysidine synthase of Salmonella heidelberg (strain SL476).